The primary structure comprises 454 residues: Probable N-octanoylanthranilate hydrolase AqdA2 (454 aa).

Catalysis depends on Ser-185, which acts as the Acyl-ester intermediate. Active-site charge relay system residues include Glu-306 and His-379.

It belongs to the type-B carboxylesterase/lipase family.

The catalysed reaction is N-octanoylanthranilate + H2O = anthranilate + octanoate + H(+). Its function is as follows. Involved in the degradation of the Pseudomonas aeruginosa quorum sensing signal molecules HHQ (2-heptyl-4-quinolone) and PQS (2-heptyl-3-hydroxy-4-quinolone) to anthranilic acid. Probably catalyzes the hydrolysis of N-octanoylanthranilic acid to anthranilic acid. The polypeptide is Probable N-octanoylanthranilate hydrolase AqdA2 (Rhodococcus erythropolis (Arthrobacter picolinophilus)).